The sequence spans 446 residues: Phosphoglucosamine mutase (446 aa).

Ser-100 serves as the catalytic Phosphoserine intermediate. Residues Ser-100, Asp-241, Asp-243, and Asp-245 each coordinate Mg(2+). Ser-100 is subject to Phosphoserine.

It belongs to the phosphohexose mutase family. Mg(2+) is required as a cofactor. Activated by phosphorylation.

It carries out the reaction alpha-D-glucosamine 1-phosphate = D-glucosamine 6-phosphate. Catalyzes the conversion of glucosamine-6-phosphate to glucosamine-1-phosphate. This chain is Phosphoglucosamine mutase, found in Methylorubrum populi (strain ATCC BAA-705 / NCIMB 13946 / BJ001) (Methylobacterium populi).